Reading from the N-terminus, the 71-residue chain is Beta-defensin 2 (71 aa).

The signal sequence occupies residues 1–20 (MRTLCSLLLICCLLFSYTTP). Intrachain disulfides connect Cys-37-Cys-66, Cys-44-Cys-59, and Cys-49-Cys-67.

It belongs to the beta-defensin family. As to expression, kidney, uterus and to a lesser extent in heart.

Its subcellular location is the secreted. Functionally, has bactericidal activity. In Mus musculus (Mouse), this protein is Beta-defensin 2 (Defb2).